A 493-amino-acid polypeptide reads, in one-letter code: Ecdysteroid UDP-glucosyltransferase (493 aa).

The N-terminal stretch at 1–17 (MIFILLTTLLAVGGAQT) is a signal peptide.

This sequence belongs to the UDP-glycosyltransferase family.

Functionally, catalyzes the transfer of glucose from UDP-glucose to ecdysteroids which are insect molting hormones. Expression of egt interferes with normal insect development and block molting. The polypeptide is Ecdysteroid UDP-glucosyltransferase (egt) (Choristoneura fumiferana defective polyhedrosis virus (Cfdef)).